Consider the following 390-residue polypeptide: MNSLSEANTKFMFDLFQQFRKSKENNIFYSPISITSALGMVLLGAKDNTAQQIKKVLHFDQVTENTTGKAATYHVDRSGNVHHQFQKLLTEFNKSTDAYELKIANKLFGEKTYLFLQEYLDAIKKFYQTSVESVDFANAPEESRKKINSWVESQTNEKIKNLIPEGNIGSNTTLVLVNAIYFKGQWEKKFNKEDTKEEKFWPNKNTYKSIQMMRQYTSFHFASLEDVQAKVLEIPYKGKDLSMIVLLPNEIDGLQKLEEKLTAEKLMEWTSLQNMRETRVDLHLPRFKVEESYDLKDTLRTMGMVDIFNGDADLSGMTGSRGLVLSGVLHKAFVEVTEEGAEAAAATAVVGFGSSPTSTNEEFHCNHPFLFFIRQNKTNSILFYGRFSSP.

Met1 carries the N-acetylmethionine modification.

It belongs to the serpin family. Ov-serpin subfamily. As to quaternary structure, interacts with MAPK8/JNK1. Squamous cells. Expressed in some hepatocellular carcinoma (at protein level).

The protein resides in the cytoplasm. May act as a papain-like cysteine protease inhibitor to modulate the host immune response against tumor cells. Also functions as an inhibitor of UV-induced apoptosis via suppression of the activity of c-Jun NH(2)-terminal kinase (JNK1). The chain is Serpin B3 (SERPINB3) from Homo sapiens (Human).